We begin with the raw amino-acid sequence, 326 residues long: Phospho-N-acetylmuramoyl-pentapeptide-transferase (326 aa).

9 consecutive transmembrane segments (helical) span residues 3 to 23 (ISISAGIVTFLLTLVGIPAFI), 51 to 71 (TMGGLVFLIAAVVVSFLVALF), 79 to 99 (VGMILFILVLYGLVGFLDDFL), 115 to 135 (LALQLLGGVIFYLFYERGGDM), 138 to 158 (VFGYQVHLGIFYIIFALFWLV), 169 to 189 (GIDGLASISVVISLSAYGVIA), 195 to 215 (MDILLVIFAMIGGLLGFFVFN), 221 to 243 (VFMGDVGSLALGGMLAAISMALH), and 306 to 326 (FFFWGVGLLASLLTFAILYLM).

Belongs to the glycosyltransferase 4 family. MraY subfamily. It depends on Mg(2+) as a cofactor.

It localises to the cell membrane. It carries out the reaction UDP-N-acetyl-alpha-D-muramoyl-L-alanyl-gamma-D-glutamyl-L-lysyl-D-alanyl-D-alanine + di-trans,octa-cis-undecaprenyl phosphate = Mur2Ac(oyl-L-Ala-gamma-D-Glu-L-Lys-D-Ala-D-Ala)-di-trans,octa-cis-undecaprenyl diphosphate + UMP. The protein operates within cell wall biogenesis; peptidoglycan biosynthesis. Its function is as follows. Catalyzes the initial step of the lipid cycle reactions in the biosynthesis of the cell wall peptidoglycan: transfers peptidoglycan precursor phospho-MurNAc-pentapeptide from UDP-MurNAc-pentapeptide onto the lipid carrier undecaprenyl phosphate, yielding undecaprenyl-pyrophosphoryl-MurNAc-pentapeptide, known as lipid I. The polypeptide is Phospho-N-acetylmuramoyl-pentapeptide-transferase (Streptococcus pneumoniae (strain Taiwan19F-14)).